The sequence spans 141 residues: MAKKVLKVVKIQLPAGKANPAPPVGTVLGPTGVNIMMVCKEYNALTQGQAGMIIPAEITIYEDRSFSMKIKTAPVAELLKREAGISKGSGEPNKSKIGSITEEKLREIAEYKFPDMNAASVEAAMRTIEGTARSMGITVQK.

The protein belongs to the universal ribosomal protein uL11 family. Part of the ribosomal stalk of the 50S ribosomal subunit. Interacts with L10 and the large rRNA to form the base of the stalk. L10 forms an elongated spine to which L12 dimers bind in a sequential fashion forming a multimeric L10(L12)X complex. In terms of processing, one or more lysine residues are methylated.

Forms part of the ribosomal stalk which helps the ribosome interact with GTP-bound translation factors. This chain is Large ribosomal subunit protein uL11B/uL11C, found in Bacillus cereus (strain ATCC 14579 / DSM 31 / CCUG 7414 / JCM 2152 / NBRC 15305 / NCIMB 9373 / NCTC 2599 / NRRL B-3711).